A 210-amino-acid chain; its full sequence is Uracil phosphoribosyltransferase (210 aa).

5-phospho-alpha-D-ribose 1-diphosphate contacts are provided by residues Arg78, Arg103, and 130–138 (DPMLATGGS). Uracil is bound by residues Ile195 and 200–202 (GDA). Asp201 contacts 5-phospho-alpha-D-ribose 1-diphosphate.

Belongs to the UPRTase family. Mg(2+) serves as cofactor.

It carries out the reaction UMP + diphosphate = 5-phospho-alpha-D-ribose 1-diphosphate + uracil. It participates in pyrimidine metabolism; UMP biosynthesis via salvage pathway; UMP from uracil: step 1/1. With respect to regulation, allosterically activated by GTP. Functionally, catalyzes the conversion of uracil and 5-phospho-alpha-D-ribose 1-diphosphate (PRPP) to UMP and diphosphate. This chain is Uracil phosphoribosyltransferase, found in Leifsonia xyli subsp. xyli (strain CTCB07).